Reading from the N-terminus, the 93-residue chain is UPF0147 protein PH1921.2 (93 aa).

Belongs to the UPF0147 family.

The chain is UPF0147 protein PH1921.2 from Pyrococcus horikoshii (strain ATCC 700860 / DSM 12428 / JCM 9974 / NBRC 100139 / OT-3).